Reading from the N-terminus, the 251-residue chain is Pantothenate synthetase (251 aa).

28–35 (MGALHTGH) serves as a coordination point for ATP. The active-site Proton donor is His35. Gln59 is a (R)-pantoate binding site. Gln59 contributes to the beta-alanine binding site. 145 to 148 (GEKD) contributes to the ATP binding site. Gln151 contributes to the (R)-pantoate binding site. ATP contacts are provided by residues Val174 and 182–185 (KSSR).

This sequence belongs to the pantothenate synthetase family. Homodimer.

The protein localises to the cytoplasm. The enzyme catalyses (R)-pantoate + beta-alanine + ATP = (R)-pantothenate + AMP + diphosphate + H(+). Its pathway is cofactor biosynthesis; (R)-pantothenate biosynthesis; (R)-pantothenate from (R)-pantoate and beta-alanine: step 1/1. Its function is as follows. Catalyzes the condensation of pantoate with beta-alanine in an ATP-dependent reaction via a pantoyl-adenylate intermediate. The protein is Pantothenate synthetase of Bdellovibrio bacteriovorus (strain ATCC 15356 / DSM 50701 / NCIMB 9529 / HD100).